The chain runs to 178 residues: Histone deacetylase complex subunit SAP30L (178 aa).

2 disulfides stabilise this stretch: Cys-24-Cys-25 and Cys-33-Cys-69. The segment at 24–72 adopts an Atypical zinc-finger fold; the sequence is CCLIEDAERCGRPAGNASFSKRIQKSISQRKLKLDIDKSVRHLYICDFH. The interval 80–99 is disordered; the sequence is RNKRKRKTSDDGGESPDHEV. Positions 81-86 match the Nuclear localization signal (NLS) motif; sequence NKRKRK. Residues 83-85 are important for DNA and phosphoinositide binding; it reads RKR.

The protein belongs to the SAP30 family. As to quaternary structure, interacts with components of the histone deacetylase complex sin3a, hdac1 and hdac2. Binds histones and nucleosomes. In terms of tissue distribution, detected in embryos at 2dpf (at protein level). Widely expressed during embryogenesis and in adults.

Its subcellular location is the nucleus. It is found in the nucleolus. Its function is as follows. Functions as a transcription repressor, probably via its interaction with histone deacetylase complexes. Required for normal expression of numerous target genes. Involved in the functional recruitment of the class 1 Sin3-histone deacetylase complex (HDAC) to the nucleolus. Binds DNA, apparently without sequence-specificity, and bends bound double-stranded DNA. Binds phosphoinositol phosphates (phosphoinositol 3-phosphate, phosphoinositol 4-phosphate and phosphoinositol 5-phosphate) via the same basic sequence motif that mediates DNA binding and nuclear import. This Danio rerio (Zebrafish) protein is Histone deacetylase complex subunit SAP30L (sap30l).